Reading from the N-terminus, the 449-residue chain is PGL/p-HBAD biosynthesis rhamnosyltransferase (449 aa).

The protein belongs to the glycosyltransferase 28 family.

Its function is as follows. Catalyzes the transfer of the first rhamnosyl residue on p-hydroxybenzoic acid or phenolphthiocerol derivatives to form, after O-methylation at position 2 of the sugar unit, mono-O-methyl-glycosyl-p-hydroxybenzoic acid derivative (p-HBAD I) and 2-O-methyl-rhamnosyl-phenolphthiocerol dimycocerosate (also called mycoside B) during p-hydroxybenzoic acid derivatives (p-HBAD) and glycosylated phenolphthiocerol dimycocerosates (PGL) biosynthesis. The sequence is that of PGL/p-HBAD biosynthesis rhamnosyltransferase from Mycobacterium bovis (strain BCG / Pasteur 1173P2).